The primary structure comprises 83 residues: MSYYQQQCNQPCRPPPVCPPPKCPEPCPPQVWPGPCRPVMCFEPCLPSVWPGPCRPVVCYEQCPPQPWQSTCPPVQFPPCQQK.

Repeat copies occupy residues 21 to 29, 30 to 38, 39 to 47, 48 to 56, and 57 to 65. The segment at 21 to 65 is 5 X 9 AA approximate tandem repeats; that stretch reads PKCPEPCPPQVWPGPCRPVMCFEPCLPSVWPGPCRPVVCYEQCPP.

The protein belongs to the cornifin (SPRR) family. Post-translationally, forms five pairs of intrachain disulfide bonds.

Its subcellular location is the secreted. The protein localises to the extracellular space. It localises to the cytoplasmic vesicle. It is found in the secretory vesicle. Gut bactericidal protein that selectively kills Gram-positive bacteria by binding to negatively charged lipids on bacterial membranes, leading to bacterial membrane permeabilization and disruption. Specifically binds lipids bearing negatively charged headgroups, such as phosphatidic acid, phosphatidylserine (PS), cardiolipin (CL), and phosphatidylinositol phosphates, but not to zwitterionic or neutral lipids. Induced by type-2 cytokines in response to helminth infection and is required to protect against helminth-induced bacterial invasion of intestinal tissue. May also be involved in the development of the cornified envelope of squamous epithelia; however, additional evidences are required to confirm this result in vivo. This is Small proline-rich protein 2A3 from Mus musculus (Mouse).